The following is a 306-amino-acid chain: Glutathione transport system permease protein GsiC (306 aa).

Residues 1–8 (MLNYVIKR) are Cytoplasmic-facing. Residues 9-29 (LLGLIPTLFIVSVLVFLFVHM) traverse the membrane as a helical segment. Topologically, residues 30–102 (LPGDPARLIA…SRFMPTLWLT (73 aa)) are periplasmic. The region spanning 95–292 (FMPTLWLTIT…LEFILINLVV (198 aa)) is the ABC transmembrane type-1 domain. A helical transmembrane segment spans residues 103 to 123 (ITSMVWAVIFGMAAGIIAAVW). Residues 124–134 (RNRWPDRLSMT) are Cytoplasmic-facing. The chain crosses the membrane as a helical span at residues 135–155 (IAVSGISFPAFALGMLLIQVF). At 156–168 (SVELGWLPTVGAD) the chain is on the periplasmic side. A helical transmembrane segment spans residues 169 to 189 (SWQHYILSSLTLGAAVAAVMA). At 190–228 (RFTRASFVDVLSEDYMRTARAKGVSETWVVLKHGLRNAM) the chain is on the cytoplasmic side. The helical transmembrane segment at 229-249 (IPVVTMMGLQFGFLLGGSIVV) threads the bilayer. Over 250 to 277 (EKVFNWPGLGRLLVDSVEMRDYPVIQAE) the chain is Periplasmic. Residues 278–298 (ILLFSLEFILINLVVDVLYAA) form a helical membrane-spanning segment. The Cytoplasmic segment spans residues 299–306 (INPAIRYK).

It belongs to the binding-protein-dependent transport system permease family. As to quaternary structure, the complex is composed of two ATP-binding proteins (GsiA), two transmembrane proteins (GsiC and GsiD) and a solute-binding protein (GsiB).

It localises to the cell inner membrane. Its function is as follows. Part of the ABC transporter complex GsiABCD involved in glutathione import. Probably responsible for the translocation of the substrate across the membrane. This chain is Glutathione transport system permease protein GsiC, found in Shigella boydii serotype 4 (strain Sb227).